A 245-amino-acid polypeptide reads, in one-letter code: Geranylgeranylglyceryl phosphate synthase (245 aa).

The Mg(2+) site is built by D24 and S54. Sn-glycerol 1-phosphate-binding positions include 172-178 (YLEAGSG), 203-204 (GG), and 225-226 (GT).

Belongs to the GGGP/HepGP synthase family. Group II subfamily. Mg(2+) is required as a cofactor.

It localises to the cytoplasm. It carries out the reaction sn-glycerol 1-phosphate + (2E,6E,10E)-geranylgeranyl diphosphate = sn-3-O-(geranylgeranyl)glycerol 1-phosphate + diphosphate. It participates in membrane lipid metabolism; glycerophospholipid metabolism. Prenyltransferase that catalyzes the transfer of the geranylgeranyl moiety of geranylgeranyl diphosphate (GGPP) to the C3 hydroxyl of sn-glycerol-1-phosphate (G1P). This reaction is the first ether-bond-formation step in the biosynthesis of archaeal membrane lipids. The sequence is that of Geranylgeranylglyceryl phosphate synthase from Staphylothermus marinus (strain ATCC 43588 / DSM 3639 / JCM 9404 / F1).